An 826-amino-acid chain; its full sequence is Arsenite oxidase subunit AioA (826 aa).

[3Fe-4S] cluster contacts are provided by Cys22, Cys25, and Cys29. Substrate-binding residues include His196, Glu204, Arg419, and His423.

This sequence belongs to the prokaryotic molybdopterin-containing oxidoreductase family. As to quaternary structure, heterodimer consisting of a large and a small subunit. [3Fe-4S] cluster is required as a cofactor. It depends on Mo-bis(molybdopterin guanine dinucleotide) as a cofactor.

The catalysed reaction is 2 oxidized [azurin] + arsenite + H2O = 2 reduced [azurin] + arsenate + 3 H(+). In terms of biological role, involved in the detoxification of arsenic. Oxidizes As(III)O3(3-) (arsenite) to the somewhat less toxic As(V)O4(3-) (arsenate). The protein is Arsenite oxidase subunit AioA (aioA) of Herminiimonas arsenicoxydans.